The chain runs to 227 residues: Guanylate kinase (227 aa).

The Guanylate kinase-like domain maps to 21–199 (GNLFMVVAPS…ALAELECIVA (179 aa)). 28–35 (APSGAGKS) contacts ATP.

It belongs to the guanylate kinase family.

The protein resides in the cytoplasm. It carries out the reaction GMP + ATP = GDP + ADP. Its function is as follows. Essential for recycling GMP and indirectly, cGMP. The protein is Guanylate kinase of Burkholderia orbicola (strain AU 1054).